Reading from the N-terminus, the 57-residue chain is Large ribosomal subunit protein bL32c (57 aa).

A disordered region spans residues 1 to 21 (MAVPKKRTSKSKKNLRKNTWK).

This sequence belongs to the bacterial ribosomal protein bL32 family.

The protein resides in the plastid. It localises to the chloroplast. In Stigeoclonium helveticum (Green alga), this protein is Large ribosomal subunit protein bL32c.